Reading from the N-terminus, the 177-residue chain is Transcriptional repressor NrdR (177 aa).

The segment at 3-34 (CPYCGGSETQVKDSRPSEDGAAIRRRRVCPDC) is a zinc-finger region. The ATP-cone domain maps to 49–139 (VVVLKRSGKR…VYKNFREARD (91 aa)). Residues 148–177 (SDGMPVPAAAPEAEGDPEPEASGRRRAGRP) are disordered.

It belongs to the NrdR family. Requires Zn(2+) as cofactor.

In terms of biological role, negatively regulates transcription of bacterial ribonucleotide reductase nrd genes and operons by binding to NrdR-boxes. This is Transcriptional repressor NrdR from Methylobacterium radiotolerans (strain ATCC 27329 / DSM 1819 / JCM 2831 / NBRC 15690 / NCIMB 10815 / 0-1).